The following is a 720-amino-acid chain: Ornithine decarboxylase (720 aa).

Position 354 is an N6-(pyridoxal phosphate)lysine (lysine 354).

This sequence belongs to the Orn/Lys/Arg decarboxylase class-I family. Pyridoxal 5'-phosphate serves as cofactor.

It catalyses the reaction L-ornithine + H(+) = putrescine + CO2. The protein is Ornithine decarboxylase (speF) of Haemophilus influenzae (strain ATCC 51907 / DSM 11121 / KW20 / Rd).